A 100-amino-acid polypeptide reads, in one-letter code: NADH-quinone oxidoreductase subunit K (100 aa).

The next 3 helical transmembrane spans lie at 3-23, 29-49, and 63-83; these read PTAYYVALSGLLFAIGMIGVL, IMIFLSVELMLNAANLALVAF, and FIVMTLAAAEVAIGLAIIVAI.

The protein belongs to the complex I subunit 4L family. NDH-1 is composed of 15 different subunits. Subunits NuoA, H, J, K, L, M, N constitute the membrane sector of the complex.

It localises to the cell membrane. It catalyses the reaction a quinone + NADH + 5 H(+)(in) = a quinol + NAD(+) + 4 H(+)(out). In terms of biological role, NDH-1 shuttles electrons from NADH, via FMN and iron-sulfur (Fe-S) centers, to quinones in the respiratory chain. The immediate electron acceptor for the enzyme in this species is believed to be a menaquinone. Couples the redox reaction to proton translocation (for every two electrons transferred, four hydrogen ions are translocated across the cytoplasmic membrane), and thus conserves the redox energy in a proton gradient. The chain is NADH-quinone oxidoreductase subunit K from Deinococcus geothermalis (strain DSM 11300 / CIP 105573 / AG-3a).